Reading from the N-terminus, the 505-residue chain is ATP synthase subunit alpha (505 aa).

Position 169–176 (169–176) interacts with ATP; the sequence is GDRKTGKT.

The protein belongs to the ATPase alpha/beta chains family. As to quaternary structure, F-type ATPases have 2 components, CF(1) - the catalytic core - and CF(0) - the membrane proton channel. CF(1) has five subunits: alpha(3), beta(3), gamma(1), delta(1), epsilon(1). CF(0) has three main subunits: a(1), b(2) and c(9-12). The alpha and beta chains form an alternating ring which encloses part of the gamma chain. CF(1) is attached to CF(0) by a central stalk formed by the gamma and epsilon chains, while a peripheral stalk is formed by the delta and b chains.

The protein localises to the cell membrane. It carries out the reaction ATP + H2O + 4 H(+)(in) = ADP + phosphate + 5 H(+)(out). Its function is as follows. Produces ATP from ADP in the presence of a proton gradient across the membrane. The alpha chain is a regulatory subunit. The protein is ATP synthase subunit alpha of Leuconostoc mesenteroides subsp. mesenteroides (strain ATCC 8293 / DSM 20343 / BCRC 11652 / CCM 1803 / JCM 6124 / NCDO 523 / NBRC 100496 / NCIMB 8023 / NCTC 12954 / NRRL B-1118 / 37Y).